Consider the following 1071-residue polypeptide: MKLIYTEMSYSMTEILVNEARKAADQGYRVFYIAPNSLSFEKEREVLTLLPERGTFSIIVTRFVQMSRYFTVESSPSKQHLDDTTLAMIFYRALMQLKPEDLPSYGRLQNNSVFIEQLVELYKELKNAQLSVHDLTGLDHPQKQEDLIKIIELAETIMIQQDYNQDSPLQSFARAIKLGLLNNQLSKTVVVIDGFSRFSAEEDYLLSLLNNNCQEVIIGSYVSQKAYQKSFIKGNIYEASLHFLQDLAQKYHIKPVFATSNQVFKPAFSRLTQLFEATHDFSQVDWQLQKSDLDHFSLWQCHHQKEEIEHVAKSIRQKLYEGYRYKDILVLLGDMDAYQLQIGPIFDKFEIPYYLGKAEPMAAHPLVQFIESLERSQRYNWRREDILNMLKSGLFGCFDDSDIDRFEEYTQFADIKGFTKFSKPFTINSSRQYPLDFLNEMRQDIVLPLQELFKSQKQLGASLVDKLILFLKKIRLAENMQGLAQSQLEVEKNEEVWKRFTDILTSFHHIFGQEKLRLSDCLALIKTGMKSAQYRVVPATLDVVTIKSYDLVQPHSKPFVYAIGLTQSHFPKQIHHSGLLSDQERARINEIRNYRHFDIASAENSKKNHQTALSLFNAATKELVLSVSTVINETFDDLSPYLKELINFGLPLLDKGKNYLSYDNSDIGNYKALLSQIIAINRQDLIEMSDQDKMFWTVVLRYLRKQLRKQQLELPTSDYRLSTKPLSKEVIEVCFPKGIPLKLSATALTVFYNNQYNYFLKYVLNLNKTESIHPDSRIHGQYLHRVFERLMKDHTQEPFDNKLKQAIYHTNQESFFQQVYQDNAEAEYSLAILEDIVRSTAPILQLNQNIQVIDQEKNFQLDMGNEILVHGIIDRIDQLSDGSLGIVDYKSSANQFDIGTFYNGLSPQLMTYLAALKQIAPHDINQLFGAMYLHLQDPKLDLVTFKQIDNTLVESIYKALTYKGIFSEVEKEHLSTGAYQTKNALYSNDELETLLNYNKYLYLKAAKHIKKGHFLINPYTSDGKTVQGDQLKAITRFEADLDMGQARRLVTLPAKEKKECFLTLMRKESHL.

The protein belongs to the helicase family. AddB/RexB type 2 subfamily. Heterodimer of AddA and RexB. Requires Mg(2+) as cofactor.

Its function is as follows. The heterodimer acts as both an ATP-dependent DNA helicase and an ATP-dependent, dual-direction single-stranded exonuclease. Recognizes the chi site generating a DNA molecule suitable for the initiation of homologous recombination. This subunit has 5' -&gt; 3' nuclease activity but not helicase activity. This Streptococcus pyogenes serotype M1 protein is ATP-dependent helicase/deoxyribonuclease subunit B.